The following is a 465-amino-acid chain: Mitochondrial F-box protein MFB1 (465 aa).

The F-box domain occupies 14–60 (ERSLTNLPLNLLFRILSHLDMNDLQNIGKTCTLLRMLANENIVYRNA). The disordered stretch occupies residues 253-279 (FTKSRDPDYKEMTPTSTESSDSITRLR). Over residues 254 to 263 (TKSRDPDYKE) the composition is skewed to basic and acidic residues. Residues 265–275 (TPTSTESSDSI) show a composition bias toward polar residues.

It localises to the mitochondrion. The sequence is that of Mitochondrial F-box protein MFB1 (MFB1) from Saccharomyces cerevisiae (strain ATCC 204508 / S288c) (Baker's yeast).